A 360-amino-acid chain; its full sequence is Protein pelota homolog (360 aa).

Belongs to the eukaryotic release factor 1 family. Pelota subfamily. In terms of assembly, monomer. Requires a divalent metal cation as cofactor.

Its subcellular location is the cytoplasm. May function in recognizing stalled ribosomes, interact with stem-loop structures in stalled mRNA molecules, and effect endonucleolytic cleavage of the mRNA. May play a role in the release non-functional ribosomes and degradation of damaged mRNAs. Has endoribonuclease activity. The chain is Protein pelota homolog from Hyperthermus butylicus (strain DSM 5456 / JCM 9403 / PLM1-5).